A 103-amino-acid polypeptide reads, in one-letter code: N(4)-acetylcytidine amidohydrolase (103 aa).

Residues 6-101 (ITFFQRFQDD…QTQFYVIEFK (96 aa)) form the ASCH domain. The active-site Proton acceptor is the lysine 21. Residue threonine 24 is the Nucleophile of the active site. Glutamate 74 serves as the catalytic Proton donor.

The protein belongs to the N(4)-acetylcytidine amidohydrolase family.

It carries out the reaction N(4)-acetylcytidine + H2O = cytidine + acetate + H(+). The catalysed reaction is N(4)-acetyl-2'-deoxycytidine + H2O = 2'-deoxycytidine + acetate + H(+). The enzyme catalyses N(4)-acetylcytosine + H2O = cytosine + acetate + H(+). Functionally, catalyzes the hydrolysis of N(4)-acetylcytidine (ac4C). This Escherichia coli O127:H6 (strain E2348/69 / EPEC) protein is N(4)-acetylcytidine amidohydrolase (yqfB).